The chain runs to 523 residues: Light-independent protochlorophyllide reductase subunit B (523 aa).

D36 contributes to the [4Fe-4S] cluster binding site. The Proton donor role is filled by D290. 425-426 (GL) provides a ligand contact to substrate.

Belongs to the ChlB/BchB/BchZ family. Protochlorophyllide reductase is composed of three subunits; ChlL, ChlN and ChlB. Forms a heterotetramer of two ChlB and two ChlN subunits. It depends on [4Fe-4S] cluster as a cofactor.

It catalyses the reaction chlorophyllide a + oxidized 2[4Fe-4S]-[ferredoxin] + 2 ADP + 2 phosphate = protochlorophyllide a + reduced 2[4Fe-4S]-[ferredoxin] + 2 ATP + 2 H2O. The protein operates within porphyrin-containing compound metabolism; chlorophyll biosynthesis (light-independent). Component of the dark-operative protochlorophyllide reductase (DPOR) that uses Mg-ATP and reduced ferredoxin to reduce ring D of protochlorophyllide (Pchlide) to form chlorophyllide a (Chlide). This reaction is light-independent. The NB-protein (ChlN-ChlB) is the catalytic component of the complex. This Prochlorococcus marinus (strain MIT 9215) protein is Light-independent protochlorophyllide reductase subunit B.